Here is a 187-residue protein sequence, read N- to C-terminus: Elongation factor P (187 aa).

Belongs to the elongation factor P family.

It is found in the cytoplasm. Its pathway is protein biosynthesis; polypeptide chain elongation. Its function is as follows. Involved in peptide bond synthesis. Stimulates efficient translation and peptide-bond synthesis on native or reconstituted 70S ribosomes in vitro. Probably functions indirectly by altering the affinity of the ribosome for aminoacyl-tRNA, thus increasing their reactivity as acceptors for peptidyl transferase. The polypeptide is Elongation factor P (Paenarthrobacter aurescens (strain TC1)).